Consider the following 255-residue polypeptide: 5'-nucleotidase SurE (255 aa).

Residues Asp-8, Asp-9, Ser-40, and Asn-93 each coordinate a divalent metal cation.

The protein belongs to the SurE nucleotidase family. The cofactor is a divalent metal cation.

The protein resides in the cytoplasm. It carries out the reaction a ribonucleoside 5'-phosphate + H2O = a ribonucleoside + phosphate. Functionally, nucleotidase that shows phosphatase activity on nucleoside 5'-monophosphates. The protein is 5'-nucleotidase SurE of Rhodopseudomonas palustris (strain BisA53).